The sequence spans 142 residues: Large ribosomal subunit protein uL13 (142 aa).

Belongs to the universal ribosomal protein uL13 family. In terms of assembly, part of the 50S ribosomal subunit.

This protein is one of the early assembly proteins of the 50S ribosomal subunit, although it is not seen to bind rRNA by itself. It is important during the early stages of 50S assembly. The sequence is that of Large ribosomal subunit protein uL13 from Alteromonas mediterranea (strain DSM 17117 / CIP 110805 / LMG 28347 / Deep ecotype).